The following is a 239-amino-acid chain: tRNA (guanine-N(7)-)-methyltransferase (239 aa).

S-adenosyl-L-methionine-binding residues include E68, E93, D120, and D143. D143 is an active-site residue. Substrate is bound by residues K147, D180, and 217 to 220 (TKFE).

The protein belongs to the class I-like SAM-binding methyltransferase superfamily. TrmB family.

It carries out the reaction guanosine(46) in tRNA + S-adenosyl-L-methionine = N(7)-methylguanosine(46) in tRNA + S-adenosyl-L-homocysteine. The protein operates within tRNA modification; N(7)-methylguanine-tRNA biosynthesis. Catalyzes the formation of N(7)-methylguanine at position 46 (m7G46) in tRNA. This is tRNA (guanine-N(7)-)-methyltransferase from Vibrio parahaemolyticus serotype O3:K6 (strain RIMD 2210633).